Reading from the N-terminus, the 337-residue chain is Biotin synthase (337 aa).

A Radical SAM core domain is found at 39–267 (QEVQVCTLLS…KAMVRLSAGR (229 aa)). Positions 54, 58, and 61 each coordinate [4Fe-4S] cluster. 4 residues coordinate [2Fe-2S] cluster: C98, C130, C190, and R262.

The protein belongs to the radical SAM superfamily. Biotin synthase family. Homodimer. It depends on [4Fe-4S] cluster as a cofactor. [2Fe-2S] cluster is required as a cofactor.

The catalysed reaction is (4R,5S)-dethiobiotin + (sulfur carrier)-SH + 2 reduced [2Fe-2S]-[ferredoxin] + 2 S-adenosyl-L-methionine = (sulfur carrier)-H + biotin + 2 5'-deoxyadenosine + 2 L-methionine + 2 oxidized [2Fe-2S]-[ferredoxin]. It functions in the pathway cofactor biosynthesis; biotin biosynthesis; biotin from 7,8-diaminononanoate: step 2/2. Functionally, catalyzes the conversion of dethiobiotin (DTB) to biotin by the insertion of a sulfur atom into dethiobiotin via a radical-based mechanism. The sequence is that of Biotin synthase from Cytophaga hutchinsonii (strain ATCC 33406 / DSM 1761 / CIP 103989 / NBRC 15051 / NCIMB 9469 / D465).